The chain runs to 484 residues: Transcription factor MYB88 (484 aa).

The disordered stretch occupies residues 1-20; sequence MEETTKQNNMKKKKKILLHS. The short motif at 13 to 20 is the Nuclear localization signal element; sequence KKKILLHS. HTH myb-type domains follow at residues 25–76 and 77–131; these read KKER…YTYL and NSDF…KKRA. 2 consecutive DNA-binding regions (H-T-H motif) follow at residues 53–76 and 104–127; these read WAII…YTYL and WTEI…TTLC. 3 disordered regions span residues 215-241, 321-383, and 458-484; these read NATS…DKSN, RSSN…GGEL, and GVES…LDSL. A compositionally biased stretch (basic and acidic residues) spans 232 to 241; that stretch reads KESDGEDKSN. A compositionally biased stretch (low complexity) spans 339–348; the sequence is SPASSEYSSG. The segment covering 354–380 has biased composition (polar residues); it reads TIMTHPSGDKTQQLMSDTQTTSHQQNG. A compositionally biased stretch (pro residues) spans 463–476; sequence SPYPSANPSQPPPC.

In terms of assembly, interacts with RBR1. In terms of tissue distribution, expressed at low levels in all organs including roots, leaves, hypocotyls stems, flowers, siliques and buds.

It localises to the nucleus. Transcription factor that binds to DNA in promoters cis-regulatory element 5'-GGCGCGC-3' of cell cycle genes, including cyclins, cyclin-dependent kinases (CDKs), and components of the pre-replication complex. Binds to DNA in promoters cis-regulatory element 5'-AGCCG-3' of auxin regulated genes (e.g. PIN3 and PIN7). Together with FAMA and MYB124, ensures that stomata contain just two guard cells (GCs) by enforcing a single symmetric precursor cell division before stomatal maturity. Represses the expression of the mitosis-inducing factors CDKB1-1 and CDKA-1, specifically required for the last guard mother cells (GMC) symmetric divisions in the stomatal pathway. Represses CYCA2-3 in newly formed guard cells. Together with MYB88, regulates stomata spacing by restricting divisions late in the stomatal cell lineage thus limiting the number of GMC divisions. In collaboration with CDKB1-1 and CDKB1-2, restrict the G1/S transition and chloroplast and nuclear number during stomatal formation, and normally maintain fate and developmental progression throughout the stomatal cell lineage. Involved in sensing and/or transducing abiotic stress (e.g. drought and salt), probably via the positive regulation of NAC019. Regulates female reproduction being required for entry into megasporogenesis, probably via the regulation of cell cycle genes. Plays a minor role in lateral roots (LRs) initiation. Involved complementarily in establishing the gravitropic set-point angles of lateral roots by regulating the transcription of PIN3 and PIN7 in gravity-sensing cells of primary and lateral roots. In Arabidopsis thaliana (Mouse-ear cress), this protein is Transcription factor MYB88.